A 306-amino-acid chain; its full sequence is Agmatinase (306 aa).

Residues histidine 126, aspartate 149, histidine 151, aspartate 153, aspartate 230, and aspartate 232 each contribute to the Mn(2+) site.

This sequence belongs to the arginase family. Agmatinase subfamily. It depends on Mn(2+) as a cofactor.

It catalyses the reaction agmatine + H2O = urea + putrescine. It participates in amine and polyamine biosynthesis; putrescine biosynthesis via agmatine pathway; putrescine from agmatine: step 1/1. Its function is as follows. Catalyzes the formation of putrescine from agmatine. This chain is Agmatinase, found in Shigella dysenteriae serotype 1 (strain Sd197).